The sequence spans 195 residues: Thymidine kinase (195 aa).

Residues 9-16 and 87-90 each bind ATP; these read STMNAGKS and DEAQ. Glu88 acts as the Proton acceptor in catalysis. Cys145, Cys147, Cys182, and His185 together coordinate Zn(2+).

This sequence belongs to the thymidine kinase family. Homotetramer.

It localises to the cytoplasm. It carries out the reaction thymidine + ATP = dTMP + ADP + H(+). The polypeptide is Thymidine kinase (Jannaschia sp. (strain CCS1)).